The chain runs to 305 residues: N-acetylmuramic acid 6-phosphate etherase (305 aa).

Positions 59–222 (TSKALGKGGR…STGVMVKLGK (164 aa)) constitute an SIS domain. Residue E87 is the Proton donor of the active site. Residue E118 is part of the active site.

It belongs to the GCKR-like family. MurNAc-6-P etherase subfamily. Homodimer.

It catalyses the reaction N-acetyl-D-muramate 6-phosphate + H2O = N-acetyl-D-glucosamine 6-phosphate + (R)-lactate. It functions in the pathway amino-sugar metabolism; N-acetylmuramate degradation. In terms of biological role, specifically catalyzes the cleavage of the D-lactyl ether substituent of MurNAc 6-phosphate, producing GlcNAc 6-phosphate and D-lactate. This is N-acetylmuramic acid 6-phosphate etherase from Crocosphaera subtropica (strain ATCC 51142 / BH68) (Cyanothece sp. (strain ATCC 51142)).